The following is a 238-amino-acid chain: Orotidine 5'-phosphate decarboxylase (238 aa).

Substrate is bound by residues Asp10, Lys32, Asp59–Thr68, Thr122, Arg184, Gln193, Gly213, and Arg214. Residue Lys61 is the Proton donor of the active site.

It belongs to the OMP decarboxylase family. Type 1 subfamily. Homodimer.

The catalysed reaction is orotidine 5'-phosphate + H(+) = UMP + CO2. Its pathway is pyrimidine metabolism; UMP biosynthesis via de novo pathway; UMP from orotate: step 2/2. Its function is as follows. Catalyzes the decarboxylation of orotidine 5'-monophosphate (OMP) to uridine 5'-monophosphate (UMP). This is Orotidine 5'-phosphate decarboxylase from Bacillus cereus (strain ATCC 10987 / NRS 248).